The chain runs to 260 residues: MLEKVKNIIVVLSGKGGVGKSTVSTQLSLALRKNGFKVGLLDIDLCGPSVPYLLGLEGRDIFQCDEGWVPVYTDESQTLAVMSIGFLLKNREDPVIWRGPKKTMMIRQFLTDVRWDELDYLIIDTPPGTSDEHITVMECLKEVGCHGAIIVTTPQEVALDDVRKEITFCKKTGINILGIVENMSGFVCPHCTSCTNIFSSNGGASLANYAQVPHLGTLPIDPRVGVLAGSTTSVLDELPDSTTAEVLTHIVEKLKTIFVS.

ATP is bound at residue 14-21; the sequence is GKGGVGKS. Positions 188 and 191 each coordinate [4Fe-4S] cluster.

The protein belongs to the Mrp/NBP35 ATP-binding proteins family. NUBP2/CFD1 subfamily. As to quaternary structure, heterotetramer of 2 Nubp1 and 2 Nubp2 chains. [4Fe-4S] cluster is required as a cofactor.

It is found in the cytoplasm. Functionally, component of the cytosolic iron-sulfur (Fe/S) protein assembly (CIA) machinery. Required for maturation of extramitochondrial Fe-S proteins. The Nubp1-Nubp2 heterotetramer forms a Fe-S scaffold complex, mediating the de novo assembly of an Fe-S cluster and its transfer to target apoproteins. The chain is Cytosolic Fe-S cluster assembly factor Nubp2 homolog 1 from Drosophila yakuba (Fruit fly).